The primary structure comprises 332 residues: HTH-type transcriptional regulator IdnR (332 aa).

Residues 6-60 (ISLQDIATLAGVTKMTVSRYIRSPKKVAKETGERIAKIMEEINYIPNRAPGMLLN) enclose the HTH lacI-type domain. The segment at residues 8-27 (LQDIATLAGVTKMTVSRYIR) is a DNA-binding region (H-T-H motif).

Functionally, idn operon regulator. May repress gntKU and gntT genes when growing on L-idonate. This chain is HTH-type transcriptional regulator IdnR (idnR), found in Escherichia coli (strain K12).